A 134-amino-acid polypeptide reads, in one-letter code: uncharacterized protein (134 aa).

The disordered stretch occupies residues M1–E30. Residues R10–E30 are compositionally biased toward basic and acidic residues.

This is an uncharacterized protein from Homo sapiens (Human).